The primary structure comprises 281 residues: NADPH-dependent 7-cyano-7-deazaguanine reductase (281 aa).

Residue 87–89 (VES) coordinates substrate. Residue 89–90 (SK) coordinates NADPH. The active-site Thioimide intermediate is the Cys-188. Asp-195 acts as the Proton donor in catalysis. 227 to 228 (HE) contacts substrate. 256-257 (RG) is an NADPH binding site.

This sequence belongs to the GTP cyclohydrolase I family. QueF type 2 subfamily. In terms of assembly, homodimer.

It localises to the cytoplasm. It carries out the reaction 7-aminomethyl-7-carbaguanine + 2 NADP(+) = 7-cyano-7-deazaguanine + 2 NADPH + 3 H(+). It participates in tRNA modification; tRNA-queuosine biosynthesis. In terms of biological role, catalyzes the NADPH-dependent reduction of 7-cyano-7-deazaguanine (preQ0) to 7-aminomethyl-7-deazaguanine (preQ1). The sequence is that of NADPH-dependent 7-cyano-7-deazaguanine reductase from Aliivibrio fischeri (strain ATCC 700601 / ES114) (Vibrio fischeri).